The primary structure comprises 480 residues: UDP-N-acetylmuramate--L-alanine ligase (480 aa).

Residue 127 to 133 (GTHGKTT) participates in ATP binding.

Belongs to the MurCDEF family.

It localises to the cytoplasm. The catalysed reaction is UDP-N-acetyl-alpha-D-muramate + L-alanine + ATP = UDP-N-acetyl-alpha-D-muramoyl-L-alanine + ADP + phosphate + H(+). The protein operates within cell wall biogenesis; peptidoglycan biosynthesis. In terms of biological role, cell wall formation. The chain is UDP-N-acetylmuramate--L-alanine ligase from Blochmanniella floridana.